The primary structure comprises 449 residues: SUPPRESSOR OF GAMMA RESPONSE 1 (449 aa).

The region spanning 58–211 (LPRGVKFDPS…DYVVSKIFYQ (154 aa)) is the NAC domain. A DNA-binding region spans residues 167–217 (RGCKKIMVLYGGKAVKTNWVMHQYHLGIEEDEKEGDYVVSKIFYQQPQQLV). Basic and acidic residues predominate over residues 324-336 (DDKEEQEKDRDNE). Residues 324-348 (DDKEEQEKDRDNENQGEEDPTWFDS) form a disordered region.

Phosphorylated in a DNA stress-independent manner. Hyperphosphorylated on SQ motifs upon double-strand breaks, H(2)O(2) or zeocin treatments. Hyperphosphorylation is required for SOG1 function, and unlike constitutive phosphorylation, is ATM dependent. Expressed in shoot and root apical meristems, in lateral root primordia, in the vasculature of young leaves and in the root stele.

It is found in the nucleus. Functionally, transcription factor regulating the transcriptional activation response to gamma irradiation. Required for stem-cell death induced by UVB or by gamma irradiation. Not required for ATM activation, but participates in pathways governed by both ATM and ATR sensor kinases. Involved in DNA damage response (DDR) system that regulates cell cycle arrest. Functional homolog of animal p53. Regulates SMR5 and SMR7 transcription. Regulates DNA repair and cytokinin signaling separately and plays a key role in controlling lateral root formation under genotoxic stress. This Arabidopsis thaliana (Mouse-ear cress) protein is SUPPRESSOR OF GAMMA RESPONSE 1.